Reading from the N-terminus, the 1161-residue chain is Hamartin (1161 aa).

Lys30 participates in a covalent cross-link: Glycyl lysine isopeptide (Lys-Gly) (interchain with G-Cter in ubiquitin). Disordered regions lie at residues 296–336 (PYVD…PSTR) and 353–591 (CGMT…QRGV). The span at 303-336 (SYGGSTSTPSSSSRLMLFSPPGQLPQSLSSPSTR) shows a compositional bias: low complexity. Over residues 393–402 (TSPPPAPPCP) the composition is skewed to pro residues. The interval 403–784 (QDDCVHGSAA…QIRQLQHDRE (382 aa)) is mediates interaction with WDR45B. Positions 471–484 (EKDKEEAAISKELS) are enriched in basic and acidic residues. Phosphoserine occurs at positions 484, 502, 508, 518, 592, and 595. Polar residues predominate over residues 509 to 529 (LSGSQRKTHSAASGTQGSSVN). 3 coiled-coil regions span residues 721 to 849 (IRAA…NRQL), 879 to 917 (TAYR…AKKD), and 967 to 991 (EKDG…ERLD). Disordered stretches follow at residues 1003 to 1077 (GHNE…SLPS) and 1092 to 1161 (NKSE…PEHS). The segment covering 1004-1017 (HNEEASGHNGETRT) has biased composition (basic and acidic residues). The segment covering 1026 to 1043 (SCGGRVTGGSSSSSSELS) has biased composition (low complexity). Polar residues predominate over residues 1064–1077 (PSSSIPTTVGSLPS). The residue at position 1094 (Ser1094) is a Phosphoserine. The segment covering 1103–1113 (VTMSSSSLSET) has biased composition (low complexity). Composition is skewed to basic and acidic residues over residues 1114–1124 (LKTELGKDSGT) and 1152–1161 (DYNETHPEHS).

In terms of assembly, component of the TSC-TBC complex (also named Rhebulator complex), composed of 2 molecules of TSC1, 2 molecules of TSC2 and 1 molecule of TBC1D7. Probably forms a complex composed of chaperones HSP90 and HSP70, co-chaperones STIP1/HOP, CDC37, PPP5C, PTGES3/p23, TSC1 and client protein TSC2. Forms a complex composed of chaperones HSP90 and HSP70, co-chaperones CDC37, PPP5C, TSC1 and client protein TSC2, CDK4, AKT, RAF1 and NR3C1; this complex does not contain co-chaperones STIP1/HOP and PTGES3/p23. Forms a complex containing HSP90AA1, TSC1 and TSC2; TSC1 is required to recruit TCS2 to the complex. Interacts (via C-terminus) with the closed form of HSP90AA1 (via the middle domain and TPR repeat-binding motif). Interacts with DOCK7. Interacts with FBXW5. Interacts with WDR45B. Interacts with RPAP3 and URI1. In terms of processing, phosphorylation at Ser-502 does not affect interaction with TSC2. Post-translationally, 'Lys-63'-linked ubiquitinated at Lys-30 by PELI1; the ubiquitination promotes TSC1/TSC2 complex stability.

It is found in the lysosome membrane. It localises to the cytoplasm. Its subcellular location is the cytosol. In terms of biological role, non-catalytic component of the TSC-TBC complex, a multiprotein complex that acts as a negative regulator of the canonical mTORC1 complex, an evolutionarily conserved central nutrient sensor that stimulates anabolic reactions and macromolecule biosynthesis to promote cellular biomass generation and growth. The TSC-TBC complex acts as a GTPase-activating protein (GAP) for the small GTPase RHEB, a direct activator of the protein kinase activity of mTORC1. In absence of nutrients, the TSC-TBC complex inhibits mTORC1, thereby preventing phosphorylation of ribosomal protein S6 kinase (RPS6KB1 and RPS6KB2) and EIF4EBP1 (4E-BP1) by the mTORC1 signaling. The TSC-TBC complex is inactivated in response to nutrients, relieving inhibition of mTORC1. Within the TSC-TBC complex, TSC1 stabilizes TSC2 and prevents TSC2 self-aggregation. Involved in microtubule-mediated protein transport via its ability to regulate mTORC1 signaling. Also acts as a co-chaperone for HSP90AA1 facilitating HSP90AA1 chaperoning of protein clients such as kinases, TSC2 and glucocorticoid receptor NR3C1. Increases ATP binding to HSP90AA1 and inhibits HSP90AA1 ATPase activity. Competes with the activating co-chaperone AHSA1 for binding to HSP90AA1, thereby providing a reciprocal regulatory mechanism for chaperoning of client proteins. Recruits TSC2 to HSP90AA1 and stabilizes TSC2 by preventing the interaction between TSC2 and ubiquitin ligase HERC1. This Mus musculus (Mouse) protein is Hamartin.